Here is a 109-residue protein sequence, read N- to C-terminus: FAD assembly factor SdhE (109 aa).

The tract at residues methionine 1–aspartate 22 is disordered. Over residues alanine 7–serine 17 the composition is skewed to low complexity.

The protein belongs to the SdhE FAD assembly factor family.

The protein resides in the cytoplasm. In terms of biological role, an FAD assembly protein, which accelerates covalent attachment of the cofactor into other proteins. Plays an essential role in the assembly of succinate dehydrogenase (SDH, respiratory complex II), an enzyme complex that is a component of both the tricarboxylic acid cycle and the electron transport chain, and which couples the oxidation of succinate to fumarate with the reduction of ubiquinone (coenzyme Q) to ubiquinol. Required for flavinylation of SdhA, when the SDH operon and this gene are overexpressed in G.oxydans. Flavinylation of SdhA is detected only in the presence of sdhE. The sequence is that of FAD assembly factor SdhE from Acetobacter pasteurianus (strain NBRC 105184 / IFO 3283-01).